We begin with the raw amino-acid sequence, 100 residues long: RING finger protein Z (100 aa).

Gly2 carries the N-myristoyl glycine; by host lipid modification. The RING-type; atypical zinc-finger motif lies at 43-79; that stretch reads CRCCWFANTNLIKCSDHYICLKCLNIMLGKSSFCDIC. The short motif at 93 to 96 is the PTAP/PSAP motif element; sequence PSAP.

Belongs to the arenaviridae Z protein family. In terms of assembly, interacts with protein NP; this interaction probably directs the encapsidated genome to budding sites. Interacts (via RING domain) with polymerase L; this interaction inhibits viral transcription and replication, Z partially blocks the product exit tunnel for the releasing nascent RNA product. Interacts with the glycoprotein complex; this interaction plays a role in virion budding. Interacts with host eIF4E; this interaction results in eIF4E reduced affinity for its substrate, the 5'-m7 G cap structure. Interacts (via late-budding domain) with host TSG101; this interaction is essential for budding and release of viral particles. Interacts with host RPLP0; this interaction may serve to load ribosome-like particles inside the virion. Interacts with host PML; this interaction induces PML bodies redistribution in the cytoplasm upon viral infection. Post-translationally, myristoylation is required for the role of RING finger protein Z in assembly and budding.

It localises to the virion. The protein resides in the host cytoplasm. The protein localises to the host perinuclear region. Its subcellular location is the host cell membrane. In terms of biological role, plays a crucial role in virion assembly and budding. Expressed late in the virus life cycle, it acts as an inhibitor of viral transcription and RNA synthesis by interacting with the viral polymerase L. Presumably recruits the NP encapsidated genome to cellular membranes at budding sites via direct interaction with NP. Plays critical roles in the final steps of viral release by interacting with host TSG101, a member of the vacuolar protein-sorting pathway and using other cellular host proteins involved in vesicle formation pathway. The budding of the virus progeny occurs after association of protein Z with the viral glycoprotein complex SSP-GP1-GP2 at the cell periphery, step that requires myristoylation of protein Z. Also selectively represses protein production by associating with host eIF4E. In cell-based minigenome assay, has an inhibitory effect on the ribonucleoprotein machinery (vRNP), which is responsible for the replication and transcription of the viral genome. The polypeptide is RING finger protein Z (Homo sapiens (Human)).